A 476-amino-acid chain; its full sequence is Argininosuccinate lyase (476 aa).

It belongs to the lyase 1 family. Argininosuccinate lyase subfamily.

Its subcellular location is the cytoplasm. The enzyme catalyses 2-(N(omega)-L-arginino)succinate = fumarate + L-arginine. Its pathway is amino-acid biosynthesis; L-arginine biosynthesis; L-arginine from L-ornithine and carbamoyl phosphate: step 3/3. The protein is Argininosuccinate lyase of Acaryochloris marina (strain MBIC 11017).